Here is a 427-residue protein sequence, read N- to C-terminus: Protein TIFY 6a (427 aa).

Over residues 1 to 25 the composition is skewed to basic and acidic residues; the sequence is MERDFLGAIWRKEEAAGKPEEHSDY. Disordered regions lie at residues 1–32 and 128–154; these read MERD…GGGA and YGVA…HANP. Residues 136–146 are compositionally biased toward pro residues; the sequence is FPSPSPSPRHP. The Tify domain occupies 196–231; that stretch reads QNPKVTQMTIFYDGLVNVFDNIPVEKAQELMLLASR. The tract at residues 296–327 is disordered; the sequence is SFSSSNDSAGPKSGGLPLAVTPLSQASPSQPI. A compositionally biased stretch (polar residues) spans 317–327; sequence PLSQASPSQPI. Residues 343–367 carry the Jas motif; the sequence is PQARKASLARFLEKRKERVSSVAPY. A Nuclear localization signal motif is present at residues 345 to 352; sequence ARKASLAR. Positions 361–427 are disordered; it reads VSSVAPYPSS…QEPPSTKLQI (67 aa). Composition is skewed to polar residues over residues 369–402 and 411–427; these read SSKS…NNCE and RNIS…KLQI.

It belongs to the TIFY/JAZ family. Interacts with COI1A. Interacts with COI1A and COI1B in a coronatine-dependent manner. Coronatine is an analog of jasmonoyl isoleucine (JA-Ile). Ubiquitinated. Targeted for degradation by the SCF(COI1) E3 ubiquitin ligase-proteasome pathway during jasmonate signaling.

The protein resides in the nucleus. Repressor of jasmonate responses. The protein is Protein TIFY 6a of Oryza sativa subsp. japonica (Rice).